The chain runs to 579 residues: Adenine deaminase (579 aa).

This sequence belongs to the metallo-dependent hydrolases superfamily. Adenine deaminase family. Mn(2+) serves as cofactor.

It catalyses the reaction adenine + H2O + H(+) = hypoxanthine + NH4(+). This chain is Adenine deaminase, found in Listeria monocytogenes serotype 4b (strain F2365).